Consider the following 148-residue polypeptide: 3-hydroxyacyl-[acyl-carrier-protein] dehydratase FabZ (148 aa).

Residue His-50 is part of the active site.

This sequence belongs to the thioester dehydratase family. FabZ subfamily.

The protein resides in the cytoplasm. The catalysed reaction is a (3R)-hydroxyacyl-[ACP] = a (2E)-enoyl-[ACP] + H2O. Its function is as follows. Involved in unsaturated fatty acids biosynthesis. Catalyzes the dehydration of short chain beta-hydroxyacyl-ACPs and long chain saturated and unsaturated beta-hydroxyacyl-ACPs. This Levilactobacillus brevis (strain ATCC 367 / BCRC 12310 / CIP 105137 / JCM 1170 / LMG 11437 / NCIMB 947 / NCTC 947) (Lactobacillus brevis) protein is 3-hydroxyacyl-[acyl-carrier-protein] dehydratase FabZ.